We begin with the raw amino-acid sequence, 120 residues long: MSESQSSGRSAEALALQHLSDSGLRLLERNWSCRSGELDLVMLDGDTVVFVEVRYRRHTAWGGALESVDVRKQQKLIKAAQLFLQAHGRWAKHPCRFDVVAITAPGQAKDLNWIRNAFES.

The protein belongs to the UPF0102 family.

In Stutzerimonas stutzeri (strain A1501) (Pseudomonas stutzeri), this protein is UPF0102 protein PST_1070.